We begin with the raw amino-acid sequence, 347 residues long: Probable G-protein coupled receptor 148 (347 aa).

Over 1-51 (MGDELAPCPVGTTAWPALIQLISKTPCMPQAASNTSLGLGDLRVPSSMLYW) the chain is Extracellular. N-linked (GlcNAc...) asparagine glycosylation occurs at Asn34. A helical membrane pass occupies residues 52 to 72 (LFLPSSLLAAATLAVSPLLLV). Residues 73–85 (TILRNQRLRQEPH) are Cytoplasmic-facing. The helical transmembrane segment at 86–106 (YLLPANILLSDLAYILLHMLI) threads the bilayer. Residues 107 to 130 (SSSSLGGWELGRMACGILTDAVFA) are Extracellular-facing. The helical transmembrane segment at 131–151 (ACTSTILSFTAIVLHTYLAVI) threads the bilayer. At 152 to 165 (HPLRYLSFMSHGAA) the chain is on the cytoplasmic side. Residues 166 to 186 (WKAVALIWLVACCFPTFLIWL) form a helical membrane-spanning segment. Residues 187 to 214 (SKWQDAQLEEQGASYILPPSMGTQPGCG) are Extracellular-facing. A helical transmembrane segment spans residues 215–235 (LLVIVTYTSILCVLFLCTALI). Residues 236-261 (ANCFWRIYAEAKTSGIWGQGYSRARG) lie on the Cytoplasmic side of the membrane. The chain crosses the membrane as a helical span at residues 262–282 (TLLIHSVLITLYVSTGVVFSL). The Extracellular segment spans residues 283–299 (DMVLTRYHHIDSGTHTW). Residues 300–322 (LLAANSEVLMMLPRAMLTYLYLL) traverse the membrane as a helical segment. Residues 323 to 347 (RYRQLLGMVRGHLPSRRHQAIFTIS) are Cytoplasmic-facing.

It belongs to the G-protein coupled receptor 1 family. In terms of tissue distribution, expression restricted to nervous system and testis. Is also detected in several tumors types, most notably prostate cancer.

It is found in the cell membrane. Its function is as follows. Orphan receptor. The sequence is that of Probable G-protein coupled receptor 148 (GPR148) from Homo sapiens (Human).